Reading from the N-terminus, the 86-residue chain is Stage V sporulation protein S (86 aa).

In terms of biological role, interferes with sporulation at an early stage. Seems to play a positive role in allowing cells to progress beyond stage V of sporulation. The polypeptide is Stage V sporulation protein S (Bacillus subtilis (strain 168)).